Consider the following 425-residue polypeptide: Serine--tRNA ligase (425 aa).

Position 230 to 232 (230 to 232) interacts with L-serine; it reads TAE. Position 261–263 (261–263) interacts with ATP; sequence RSE. Residue E284 coordinates L-serine. An ATP-binding site is contributed by 348–351; it reads EISS. Position 383 (S383) interacts with L-serine.

It belongs to the class-II aminoacyl-tRNA synthetase family. Type-1 seryl-tRNA synthetase subfamily. As to quaternary structure, homodimer. The tRNA molecule binds across the dimer.

The protein resides in the cytoplasm. The enzyme catalyses tRNA(Ser) + L-serine + ATP = L-seryl-tRNA(Ser) + AMP + diphosphate + H(+). It catalyses the reaction tRNA(Sec) + L-serine + ATP = L-seryl-tRNA(Sec) + AMP + diphosphate + H(+). It participates in aminoacyl-tRNA biosynthesis; selenocysteinyl-tRNA(Sec) biosynthesis; L-seryl-tRNA(Sec) from L-serine and tRNA(Sec): step 1/1. Its function is as follows. Catalyzes the attachment of serine to tRNA(Ser). Is also able to aminoacylate tRNA(Sec) with serine, to form the misacylated tRNA L-seryl-tRNA(Sec), which will be further converted into selenocysteinyl-tRNA(Sec). The sequence is that of Serine--tRNA ligase from Ligilactobacillus salivarius (strain UCC118) (Lactobacillus salivarius).